The sequence spans 485 residues: Glycogen synthase (485 aa).

Lys-15 contributes to the ADP-alpha-D-glucose binding site.

It belongs to the glycosyltransferase 1 family. Bacterial/plant glycogen synthase subfamily.

It carries out the reaction [(1-&gt;4)-alpha-D-glucosyl](n) + ADP-alpha-D-glucose = [(1-&gt;4)-alpha-D-glucosyl](n+1) + ADP + H(+). Its pathway is glycan biosynthesis; glycogen biosynthesis. Synthesizes alpha-1,4-glucan chains using ADP-glucose. The protein is Glycogen synthase (glgA) of Geobacillus stearothermophilus (Bacillus stearothermophilus).